The sequence spans 377 residues: MGHDSDVRADIAHARRLVVKIGSSSLTDDDGRVDPNQIDMIADALEARMARDTDLIVVSSGAVACGMGPLELAQRPTDLATKQAAASVGQVLLAQEWARSFARYGRTIGQVLLTASDAAERDRARNAQRTIDRLRQLKAVPIVNENDTVATSEMRFGDNDRLAALVSHLAFADACVLLSDVDGLYDRNPAEPGAQFIAEVKSSKDLKGVAAGDGGRLGTGGMAAKVSAARLASRAGVPVLLTSTENIGAALDTAEVGTCFWPDQDRLSAWKFWVLYAADSHGQLHLDAGAVHAVTENHKSLLSVGITKVEGDFSQRDVVDLVGPDGNIVGRGEVAYDSAMLHDLIGQSTSDLPEFARRPVVHADYMSHYSNRAQLKG.

Lys-20 lines the ATP pocket. Substrate contacts are provided by Ser-60, Asp-147, and Asn-159. Residue 179–180 (SD) participates in ATP binding. A PUA domain is found at 281 to 355 (HGQLHLDAGA…GQSTSDLPEF (75 aa)).

This sequence belongs to the glutamate 5-kinase family.

It localises to the cytoplasm. The enzyme catalyses L-glutamate + ATP = L-glutamyl 5-phosphate + ADP. It participates in amino-acid biosynthesis; L-proline biosynthesis; L-glutamate 5-semialdehyde from L-glutamate: step 1/2. Its function is as follows. Catalyzes the transfer of a phosphate group to glutamate to form L-glutamate 5-phosphate. This chain is Glutamate 5-kinase, found in Corynebacterium jeikeium (strain K411).